Here is a 244-residue protein sequence, read N- to C-terminus: ATP synthase subunit a (244 aa).

7 helical membrane-spanning segments follow: residues 20–40, 81–101, 113–133, 140–160, 176–196, 202–222, and 223–243; these read FFDI…VIVI, GILF…LNVM, QLLV…IWGF, FLNI…LVFI, LFAN…AAIY, FIGI…LGIA, and FLQA…IINL.

This sequence belongs to the ATPase A chain family. F-type ATPases have 2 components, CF(1) - the catalytic core - and CF(0) - the membrane proton channel. CF(1) has five subunits: alpha(3), beta(3), gamma(1), delta(1), epsilon(1). CF(0) has three main subunits: a, b and c.

The protein resides in the mitochondrion inner membrane. Mitochondrial membrane ATP synthase (F(1)F(0) ATP synthase or Complex V) produces ATP from ADP in the presence of a proton gradient across the membrane which is generated by electron transport complexes of the respiratory chain. F-type ATPases consist of two structural domains, F(1) - containing the extramembraneous catalytic core and F(0) - containing the membrane proton channel, linked together by a central stalk and a peripheral stalk. During catalysis, ATP synthesis in the catalytic domain of F(1) is coupled via a rotary mechanism of the central stalk subunits to proton translocation. Key component of the proton channel; it may play a direct role in the translocation of protons across the membrane. The sequence is that of ATP synthase subunit a (atp6) from Dictyostelium discoideum (Social amoeba).